The primary structure comprises 313 residues: Homoserine O-succinyltransferase (313 aa).

The Acyl-thioester intermediate role is filled by cysteine 142. The substrate site is built by lysine 163 and serine 192. Histidine 235 (proton acceptor) is an active-site residue. Residue glutamate 237 is part of the active site. Arginine 249 contacts substrate.

The protein belongs to the MetA family.

It is found in the cytoplasm. The catalysed reaction is L-homoserine + succinyl-CoA = O-succinyl-L-homoserine + CoA. It functions in the pathway amino-acid biosynthesis; L-methionine biosynthesis via de novo pathway; O-succinyl-L-homoserine from L-homoserine: step 1/1. Its function is as follows. Transfers a succinyl group from succinyl-CoA to L-homoserine, forming succinyl-L-homoserine. The polypeptide is Homoserine O-succinyltransferase (Shewanella baltica (strain OS195)).